The following is a 330-amino-acid chain: Aspartate--ammonia ligase (330 aa).

This sequence belongs to the class-II aminoacyl-tRNA synthetase family. AsnA subfamily.

The protein localises to the cytoplasm. The enzyme catalyses L-aspartate + NH4(+) + ATP = L-asparagine + AMP + diphosphate + H(+). Its pathway is amino-acid biosynthesis; L-asparagine biosynthesis; L-asparagine from L-aspartate (ammonia route): step 1/1. This chain is Aspartate--ammonia ligase, found in Escherichia coli O81 (strain ED1a).